We begin with the raw amino-acid sequence, 514 residues long: Histidine ammonia-lyase (514 aa).

A cross-link (5-imidazolinone (Ala-Gly)) is located at residues 143–145 (ASG). Ser144 bears the 2,3-didehydroalanine (Ser) mark.

Belongs to the PAL/histidase family. Post-translationally, contains an active site 4-methylidene-imidazol-5-one (MIO), which is formed autocatalytically by cyclization and dehydration of residues Ala-Ser-Gly.

Its subcellular location is the cytoplasm. It carries out the reaction L-histidine = trans-urocanate + NH4(+). Its pathway is amino-acid degradation; L-histidine degradation into L-glutamate; N-formimidoyl-L-glutamate from L-histidine: step 1/3. The polypeptide is Histidine ammonia-lyase (Photorhabdus laumondii subsp. laumondii (strain DSM 15139 / CIP 105565 / TT01) (Photorhabdus luminescens subsp. laumondii)).